The chain runs to 906 residues: Protein translocase subunit SecA (906 aa).

ATP contacts are provided by residues glutamine 86, glycine 104–threonine 108, and aspartate 511. Basic and acidic residues-rich tracts occupy residues histidine 853–glutamate 865 and valine 877–aspartate 888. The segment at histidine 853–glutamate 906 is disordered. Cysteine 890, cysteine 892, cysteine 901, and histidine 902 together coordinate Zn(2+). Residues lysine 896 to glutamate 906 are compositionally biased toward basic residues.

It belongs to the SecA family. Monomer and homodimer. Part of the essential Sec protein translocation apparatus which comprises SecA, SecYEG and auxiliary proteins SecDF-YajC and YidC. Zn(2+) is required as a cofactor.

It localises to the cell inner membrane. Its subcellular location is the cytoplasm. It catalyses the reaction ATP + H2O + cellular proteinSide 1 = ADP + phosphate + cellular proteinSide 2.. In terms of biological role, part of the Sec protein translocase complex. Interacts with the SecYEG preprotein conducting channel. Has a central role in coupling the hydrolysis of ATP to the transfer of proteins into and across the cell membrane, serving both as a receptor for the preprotein-SecB complex and as an ATP-driven molecular motor driving the stepwise translocation of polypeptide chains across the membrane. This Francisella tularensis subsp. holarctica (strain OSU18) protein is Protein translocase subunit SecA.